The following is a 318-amino-acid chain: Probable ABC transporter permease protein MG189 (318 aa).

The next 6 membrane-spanning stretches (helical) occupy residues valine 42–phenylalanine 62, alanine 98–isoleucine 118, leucine 134–glutamine 154, proline 169–tyrosine 189, valine 230–glycine 250, and leucine 282–histidine 302. Positions isoleucine 99–phenylalanine 301 constitute an ABC transmembrane type-1 domain.

This sequence belongs to the binding-protein-dependent transport system permease family. MalFG subfamily.

It localises to the cell membrane. In terms of biological role, probably part of a binding-protein-dependent transport system. Probably responsible for the translocation of the substrate across the membrane. The polypeptide is Probable ABC transporter permease protein MG189 (Mycoplasma genitalium (strain ATCC 33530 / DSM 19775 / NCTC 10195 / G37) (Mycoplasmoides genitalium)).